Consider the following 161-residue polypeptide: Lipid droplet assembly factor 1 (161 aa).

At 1–43 the chain is on the cytoplasmic side; it reads MAKEEPQSISRDLQELQKKLSLLIDSFQNNSKVVAFMKSPVGQ. A helical transmembrane segment spans residues 44 to 61; that stretch reads YLDSHPFLAFTLLVFIVM. At 62–67 the chain is on the lumenal side; sequence SAVPVG. The chain crosses the membrane as a helical span at residues 68–87; that stretch reads FFLLIVVLTTLAALLGVIIL. Over 88–93 the chain is Cytoplasmic; the sequence is EGLVIS. A helical membrane pass occupies residues 94 to 110; it reads VGGFSLLCILCGLGFVS. Over 111–116 the chain is Lumenal; it reads LAMSGM. The helical transmembrane segment at 117–133 threads the bilayer; it reads MIASYVVVSSLISCWFS. Residues 134–161 are Cytoplasmic-facing; the sequence is PRPLTQQNTSCDFLPAMKSAEFEGLYQE.

The protein belongs to the LDAF1 family. As to quaternary structure, interacts with isoform 1 and isoform 3 of BSCL2/seipin to form an oligomeric complex. As to expression, expressed at high levels in the heart and skeletal muscle. Expressed at low levels in kidney, small intestine, lung and liver.

The protein localises to the endoplasmic reticulum membrane. The protein resides in the lipid droplet. Its function is as follows. Plays an important role in the formation of lipid droplets (LD) which are storage organelles at the center of lipid and energy homeostasis. In association with BSCL2/seipin, defines the sites of LD formation in the endoplasmic reticulum. In Homo sapiens (Human), this protein is Lipid droplet assembly factor 1.